A 154-amino-acid chain; its full sequence is Transcription antitermination protein NusB (154 aa).

This sequence belongs to the NusB family.

Functionally, involved in transcription antitermination. Required for transcription of ribosomal RNA (rRNA) genes. Binds specifically to the boxA antiterminator sequence of the ribosomal RNA (rrn) operons. The chain is Transcription antitermination protein NusB from Enterococcus faecalis (strain ATCC 700802 / V583).